The chain runs to 242 residues: Segregation and condensation protein A (242 aa).

The protein belongs to the ScpA family. Component of a cohesin-like complex composed of ScpA, ScpB and the Smc homodimer, in which ScpA and ScpB bind to the head domain of Smc. The presence of the three proteins is required for the association of the complex with DNA.

The protein localises to the cytoplasm. In terms of biological role, participates in chromosomal partition during cell division. May act via the formation of a condensin-like complex containing Smc and ScpB that pull DNA away from mid-cell into both cell halves. This Streptococcus pneumoniae serotype 19F (strain G54) protein is Segregation and condensation protein A.